Reading from the N-terminus, the 2201-residue chain is Activating signal cointegrator 1 complex subunit 3 (2201 aa).

Phosphoserine is present on Ser-12. Coiled coils occupy residues 18-81 and 328-356; these read KQDN…KQIV and IQSEQEKQLMKQYRREEKRIARREKKAGE. Positions 486-669 constitute a Helicase ATP-binding 1 domain; that stretch reads ETAYNTNENM…FLHVNPCIGL (184 aa). An ATP-binding site is contributed by 499 to 506; sequence APTGAGKT. The residue at position 572 (Lys-572) is an N6-acetyllysine. Positions 611-614 match the DEVH box motif; that stretch reads DEVH. The 219-residue stretch at 696 to 914 folds into the Helicase C-terminal 1 domain; sequence QLNNMDEVCY…GTVTNVEEAV (219 aa). The SEC63 1 domain occupies 978–1287; it reads STDLGRTASH…GAEAVCIINF (310 aa). In terms of domain architecture, Helicase ATP-binding 2 spans 1336–1511; it reads HTLYHTDCNV…WLNIRQMGLF (176 aa). 1349–1356 serves as a coordination point for ATP; it reads APTGSGKT. The DEIH box signature appears at 1453–1456; the sequence is DEIH. A Helicase C-terminal 2 domain is found at 1544–1739; it reads PTFQAIRSHS…VLSDHLNAEI (196 aa). In terms of domain architecture, SEC63 2 spans 1812 to 2176; that stretch reads PLTYGRIASY…LGLDQQYDIH (365 aa).

This sequence belongs to the helicase family. As to quaternary structure, identified in the ASCC complex that contains ASCC1, ASCC2 and ASCC3. Functions as a scaffolding subunit that interacts directly with both ASCC1 and ASCC2. Interacts directly with ALKBH3, and thereby recruits ALKBH3 to the ASCC complex. Part of the ASC-1/TRIP4 complex, that contains TRIP4, ASCC1, ASCC2 and ASCC3. Part of the RQT (ribosome quality control trigger) complex, that contains ASCC2, ASCC3 and TRIP4. Associates with ribosomes; recruited to collided ribosomes. Interacts with ZCCHC4. Interacts with ZNF598. Interacts with RPS3.

The protein resides in the nucleus. Its subcellular location is the nucleus speckle. The protein localises to the cytoplasm. It localises to the cytosol. It catalyses the reaction Couples ATP hydrolysis with the unwinding of duplex DNA by translocating in the 3'-5' direction.. The catalysed reaction is ATP + H2O = ADP + phosphate + H(+). ATPase involved both in DNA repair and rescue of stalled ribosomes. 3'-5' DNA helicase involved in repair of alkylated DNA: promotes DNA unwinding to generate single-stranded substrate needed for ALKBH3, enabling ALKBH3 to process alkylated N3-methylcytosine (3mC) within double-stranded regions. Also involved in activation of the ribosome quality control (RQC) pathway, a pathway that degrades nascent peptide chains during problematic translation. Drives the splitting of stalled ribosomes that are ubiquitinated in a ZNF598-dependent manner, as part of the ribosome quality control trigger (RQT) complex. Part of the ASC-1 complex that enhances NF-kappa-B, SRF and AP1 transactivation. The chain is Activating signal cointegrator 1 complex subunit 3 (ascc3) from Bos taurus (Bovine).